The following is a 379-amino-acid chain: Dual-specificity RNA methyltransferase RlmN (379 aa).

Catalysis depends on E90, which acts as the Proton acceptor. Residues 96–348 (EPSRGTLCVS…TTVRKTRGDD (253 aa)) form the Radical SAM core domain. C103 and C353 are joined by a disulfide. Residues C110, C114, and C117 each contribute to the [4Fe-4S] cluster site. S-adenosyl-L-methionine contacts are provided by residues 179–180 (GE), S211, 233–235 (SLH), and N310. C353 serves as the catalytic S-methylcysteine intermediate.

It belongs to the radical SAM superfamily. RlmN family. Requires [4Fe-4S] cluster as cofactor.

Its subcellular location is the cytoplasm. The catalysed reaction is adenosine(2503) in 23S rRNA + 2 reduced [2Fe-2S]-[ferredoxin] + 2 S-adenosyl-L-methionine = 2-methyladenosine(2503) in 23S rRNA + 5'-deoxyadenosine + L-methionine + 2 oxidized [2Fe-2S]-[ferredoxin] + S-adenosyl-L-homocysteine. The enzyme catalyses adenosine(37) in tRNA + 2 reduced [2Fe-2S]-[ferredoxin] + 2 S-adenosyl-L-methionine = 2-methyladenosine(37) in tRNA + 5'-deoxyadenosine + L-methionine + 2 oxidized [2Fe-2S]-[ferredoxin] + S-adenosyl-L-homocysteine. Specifically methylates position 2 of adenine 2503 in 23S rRNA and position 2 of adenine 37 in tRNAs. m2A2503 modification seems to play a crucial role in the proofreading step occurring at the peptidyl transferase center and thus would serve to optimize ribosomal fidelity. The chain is Dual-specificity RNA methyltransferase RlmN from Nitrosomonas europaea (strain ATCC 19718 / CIP 103999 / KCTC 2705 / NBRC 14298).